Here is a 451-residue protein sequence, read N- to C-terminus: Phosphoglucosamine mutase (451 aa).

Ser-101 acts as the Phosphoserine intermediate in catalysis. Mg(2+) contacts are provided by Ser-101, Asp-240, Asp-242, and Asp-244. Position 101 is a phosphoserine (Ser-101).

It belongs to the phosphohexose mutase family. It depends on Mg(2+) as a cofactor. Activated by phosphorylation.

The enzyme catalyses alpha-D-glucosamine 1-phosphate = D-glucosamine 6-phosphate. Catalyzes the conversion of glucosamine-6-phosphate to glucosamine-1-phosphate. This chain is Phosphoglucosamine mutase, found in Streptococcus pyogenes serotype M18 (strain MGAS8232).